The sequence spans 272 residues: Ribosomal RNA small subunit methyltransferase A (272 aa).

The S-adenosyl-L-methionine site is built by Asn-15, Ile-17, Gly-42, Glu-64, Asp-90, and Asn-109.

The protein belongs to the class I-like SAM-binding methyltransferase superfamily. rRNA adenine N(6)-methyltransferase family. RsmA subfamily.

Its subcellular location is the cytoplasm. It carries out the reaction adenosine(1518)/adenosine(1519) in 16S rRNA + 4 S-adenosyl-L-methionine = N(6)-dimethyladenosine(1518)/N(6)-dimethyladenosine(1519) in 16S rRNA + 4 S-adenosyl-L-homocysteine + 4 H(+). Functionally, specifically dimethylates two adjacent adenosines (A1518 and A1519) in the loop of a conserved hairpin near the 3'-end of 16S rRNA in the 30S particle. May play a critical role in biogenesis of 30S subunits. The polypeptide is Ribosomal RNA small subunit methyltransferase A (Wolbachia sp. subsp. Drosophila simulans (strain wRi)).